A 390-amino-acid polypeptide reads, in one-letter code: Chorismate synthase 2 (390 aa).

2 residues coordinate NADP(+): arginine 39 and arginine 45. FMN is bound by residues 132-134 (RSS), 253-254 (NA), glycine 298, 313-317 (KPIPT), and arginine 339.

This sequence belongs to the chorismate synthase family. Homotetramer. FMNH2 is required as a cofactor.

It carries out the reaction 5-O-(1-carboxyvinyl)-3-phosphoshikimate = chorismate + phosphate. It functions in the pathway metabolic intermediate biosynthesis; chorismate biosynthesis; chorismate from D-erythrose 4-phosphate and phosphoenolpyruvate: step 7/7. Functionally, catalyzes the anti-1,4-elimination of the C-3 phosphate and the C-6 proR hydrogen from 5-enolpyruvylshikimate-3-phosphate (EPSP) to yield chorismate, which is the branch point compound that serves as the starting substrate for the three terminal pathways of aromatic amino acid biosynthesis. This reaction introduces a second double bond into the aromatic ring system. This chain is Chorismate synthase 2, found in Bacillus cereus (strain ATCC 10987 / NRS 248).